The following is a 218-amino-acid chain: MAVAPARARSDYDYLIKLLLIGDSGVGKSCLLLRFSDDTFTTSFITTIGIDFKIRTVELDGKRIKLQIWDTAGQERFRTITTAYYRGAMGILLVYDVTDESSFNNIRNWMKNIEQHASDSVNKILVGNKADMDESKRAVPTSKGQALADEYGIKFFETSAKTNQNVEQVFLSIAKDIKQRLTESDTKAEPQGIKITKQDANKASSSSTNEKSACCSYV.

22 to 29 lines the GTP pocket; it reads GDSGVGKS. An Effector region motif is present at residues 44–52; it reads FITTIGIDF. Residues 70 to 74, 128 to 131, and 159 to 160 each bind GTP; these read DTAGQ, NKAD, and SA. The interval 182–218 is disordered; sequence TESDTKAEPQGIKITKQDANKASSSSTNEKSACCSYV. The span at 201 to 211 shows a compositional bias: polar residues; sequence NKASSSSTNEK. 2 S-geranylgeranyl cysteine lipidation sites follow: cysteine 214 and cysteine 215.

It belongs to the small GTPase superfamily. Rab family. As to quaternary structure, interacts with PI5K2.

The protein localises to the golgi apparatus membrane. It is found in the cell membrane. Functionally, involved in membrane trafficking from the Golgi to the plasma membrane. The chain is Ras-related protein RABE1e (RABE1E) from Arabidopsis thaliana (Mouse-ear cress).